The sequence spans 196 residues: Nucleoside triphosphate pyrophosphatase (196 aa).

The Proton acceptor role is filled by Asp73.

It belongs to the Maf family. A divalent metal cation is required as a cofactor.

Its subcellular location is the cytoplasm. The enzyme catalyses a ribonucleoside 5'-triphosphate + H2O = a ribonucleoside 5'-phosphate + diphosphate + H(+). It carries out the reaction a 2'-deoxyribonucleoside 5'-triphosphate + H2O = a 2'-deoxyribonucleoside 5'-phosphate + diphosphate + H(+). In terms of biological role, nucleoside triphosphate pyrophosphatase. May have a dual role in cell division arrest and in preventing the incorporation of modified nucleotides into cellular nucleic acids. The polypeptide is Nucleoside triphosphate pyrophosphatase (Anaplasma marginale (strain St. Maries)).